The chain runs to 291 residues: Kidney mitochondrial carrier protein 1 (291 aa).

Position 2 is an N-acetylserine (serine 2). Solcar repeat units lie at residues 7–96, 104–189, and 198–289; these read KPFV…LKRL, ETLL…TKKH, and DTVS…LKKL. A run of 6 helical transmembrane segments spans residues 9 to 26, 71 to 89, 106 to 124, 164 to 183, 204 to 224, and 264 to 283; these read FVYG…TFPI, GIAP…KIGT, LLIN…SAIA, GVSL…LPVY, FLSS…VDVV, and GFWP…FLTY.

The protein belongs to the mitochondrial carrier (TC 2.A.29) family. Interacts with VDAC1.

The protein resides in the mitochondrion inner membrane. It catalyses the reaction sulfite(in) + sulfate(out) = sulfite(out) + sulfate(in). It carries out the reaction thiosulfate(in) + sulfate(out) = thiosulfate(out) + sulfate(in). The enzyme catalyses sulfate(out) + phosphate(in) = sulfate(in) + phosphate(out). The catalysed reaction is oxalate(in) + sulfate(out) = oxalate(out) + sulfate(in). It catalyses the reaction malonate(in) + sulfate(out) = malonate(out) + sulfate(in). It carries out the reaction maleate(in) + sulfate(out) = maleate(out) + sulfate(in). The enzyme catalyses (S)-malate(in) + sulfate(out) = (S)-malate(out) + sulfate(in). The catalysed reaction is (3S)-citramalate(in) + sulfate(out) = (3S)-citramalate(out) + sulfate(in). It catalyses the reaction (3R)-citramalate(in) + sulfate(out) = (3R)-citramalate(out) + sulfate(in). It carries out the reaction sulfate(out) + succinate(in) = sulfate(in) + succinate(out). The enzyme catalyses (S,S)-tartrate(in) + sulfate(out) = (S,S)-tartrate(out) + sulfate(in). The catalysed reaction is (2R,3R)-tartrate(in) + sulfate(out) = (2R,3R)-tartrate(out) + sulfate(in). It catalyses the reaction D-aspartate(in) + sulfate(out) = D-aspartate(out) + sulfate(in). It carries out the reaction L-aspartate(in) + sulfate(out) = L-aspartate(out) + sulfate(in). The enzyme catalyses sulfate(in) = sulfate(out). The catalysed reaction is phosphate(in) = phosphate(out). It catalyses the reaction (S)-malate(out) = (S)-malate(in). In terms of biological role, antiporter that transports inorganic anions (sulfate, sulfite, thiosulfate and phosphate) and, to a lesser extent, a variety of dicarboxylates (e.g. malonate, malate and citramalate) and, even more so, aspartate. The sulfate/sulfate exchange is much higher than the phosphate/phosphate and malate/malate exchanges. The transport affinities is higher for sulfate and thiosulfate than for any other substrate. May catalyze the export of sulfite and thiosulfate (the hydrogen sulfide degradation products) from the mitochondria, thereby modulating the level of the hydrogen sulfide. Also may mediate a very low unidirectional transport of sulfate, phosphate and (S)-malate. The sequence is that of Kidney mitochondrial carrier protein 1 from Rattus norvegicus (Rat).